Here is a 485-residue protein sequence, read N- to C-terminus: 28S rRNA (uridine-N(3))-methyltransferase (485 aa).

S-adenosyl-L-methionine-binding residues include arginine 296, glycine 318, and asparagine 347.

It belongs to the class IV-like SAM-binding methyltransferase superfamily.

It is found in the nucleus. It catalyses the reaction uridine in 28S rRNA + S-adenosyl-L-methionine = N(3)-methyluridine in 28S rRNA + S-adenosyl-L-homocysteine + H(+). In terms of biological role, S-adenosyl-L-methionine-dependent methyltransferase that specifically methylates the uridine in position 3485 of 28S rRNA. The sequence is that of 28S rRNA (uridine-N(3))-methyltransferase from Drosophila melanogaster (Fruit fly).